Here is a 588-residue protein sequence, read N- to C-terminus: Zeta-carotene desaturase, chloroplastic/chromoplastic (588 aa).

The protein belongs to the zeta carotene desaturase family. NAD(+) is required as a cofactor. NADP(+) serves as cofactor. Requires FAD as cofactor.

The protein localises to the plastid. The protein resides in the chloroplast. Its subcellular location is the chromoplast. It catalyses the reaction 9,9'-di-cis-zeta-carotene + 2 a quinone = 7,7',9,9'-tetra-cis-lycopene + 2 a quinol. The protein operates within carotenoid biosynthesis; lycopene biosynthesis. Its function is as follows. Catalyzes the conversion of zeta-carotene to lycopene via the intermediary of neurosporene. It carries out two consecutive desaturations (introduction of double bonds) at positions C-7 and C-7'. The chain is Zeta-carotene desaturase, chloroplastic/chromoplastic (ZDS) from Solanum lycopersicum (Tomato).